The sequence spans 682 residues: Two-component system protein A (682 aa).

The disordered stretch occupies residues 11-41 (SLDDNDNGQQHQDEVQAKHQDQGHTCPSRPS). Positions 21–32 (HQDEVQAKHQDQ) are enriched in basic and acidic residues. 2 consecutive PAS domains span residues 45-105 (LSRI…PILY) and 166-239 (MNET…LREG). The 52-residue stretch at 241 to 292 (IEDEGWRYRRDGSRFWANVLITPIYQFGQHVGFVKVTRDLTERKEAEACMIA) folds into the PAC domain. The 224-residue stretch at 307–530 (NISHEIRTPM…VFWFTAKMGG (224 aa)) folds into the Histidine kinase domain. His-310 carries the phosphohistidine; by autocatalysis modification. The 118-residue stretch at 563–680 (HVLLVEDNIV…QLLRVLWKWF (118 aa)) folds into the Response regulatory domain. Asp-615 carries the post-translational modification 4-aspartylphosphate.

In terms of processing, activation probably requires a transfer of a phosphate group between a His in the histidine kinase domain and an Asp of the response regulatory domain.

The protein localises to the cytoplasm. It carries out the reaction ATP + protein L-histidine = ADP + protein N-phospho-L-histidine.. In terms of biological role, may be part of a two-component regulatory system required for formation of conidia on certain growth media. This is Two-component system protein A from Emericella nidulans (strain FGSC A4 / ATCC 38163 / CBS 112.46 / NRRL 194 / M139) (Aspergillus nidulans).